We begin with the raw amino-acid sequence, 432 residues long: Enolase (432 aa).

Residue Q166 participates in (2R)-2-phosphoglycerate binding. Residue E208 is the Proton donor of the active site. D245, E291, and D318 together coordinate Mg(2+). 4 residues coordinate (2R)-2-phosphoglycerate: K343, R372, S373, and K394. K343 functions as the Proton acceptor in the catalytic mechanism.

This sequence belongs to the enolase family. Mg(2+) is required as a cofactor.

The protein localises to the cytoplasm. Its subcellular location is the secreted. It is found in the cell surface. The catalysed reaction is (2R)-2-phosphoglycerate = phosphoenolpyruvate + H2O. It functions in the pathway carbohydrate degradation; glycolysis; pyruvate from D-glyceraldehyde 3-phosphate: step 4/5. Its function is as follows. Catalyzes the reversible conversion of 2-phosphoglycerate (2-PG) into phosphoenolpyruvate (PEP). It is essential for the degradation of carbohydrates via glycolysis. This is Enolase from Leptospira interrogans serogroup Icterohaemorrhagiae serovar copenhageni (strain Fiocruz L1-130).